We begin with the raw amino-acid sequence, 737 residues long: MPLNRTLSMSSLPGLEDWEDEFDLENTVLFEVAWEVANKVGGIYTVLQTKAKVTGDEWGDNYYLVGPYTEQGVRTQVELLEAPTPALKKTLDSMNSKGCKVYFGRWLIEGGPLVVLLDVGASAWALERWKGELWDTCNIGVPWYDREANDAVLFGFLTTWFLGEFLAQSEEKPHVVAHFHEWLAGIGLCLCRARRLPVATIFTTHATLLGRYLCAGAVDFYNNLENFNVDKEAGERQIYHRYCMERAAAHCAHVFTTVSQITAIEAQHLLKRKPDIVTPNGLNVKKFSAMHEFQNLHAQSKARIQEFVRGHFYGHLDFNLDKTLYFFIAGRYEFSNKGADVFLEALARLNYLLRVNGSEQTVVALFIMPARTNNFNVETLKGQAVRKQLWDTANTVKEKFGRKLYESLLVGSLPDMNKMLDKEDFTMMKRAIFATQRQSFPPVCTHNMLDDSSDPILTTIRRIGLFNSSADRVKVIFHPEFLSSTSPLLPVDYEEFVRGCHLGVFPSYYEPWGYTPAECTVMGIPSISTNLSGFGCFMEEHIADPSAYGIYILDRRFRSLDDSCSQLTSFLYSFCQQSRRQRIIQRNRTERLSDLLDWKYLGRYYMSARHMALSKAFPEHFTYEPSEADAAQGYRYPRPASVPPSPSLSRHSSPHQSEDEEDPRNGPLEEDSERYDEDEEAAKDRRNIRAPEWPRRASCTSSTSGSKRNSVDTATSSSLSTPSEPLSPTSSLGEERN.

Residue Ser-8 is modified to Phosphoserine; by AMPK and PKA. A Phosphoserine modification is found at Ser-11. Residue Lys-39 participates in UDP binding. Residues His-205 and Arg-211 each contribute to the UDP-alpha-D-glucose site. Alpha-D-glucose 6-phosphate contacts are provided by His-291, Glu-292, Gln-294, His-297, and Lys-301. A UDP-binding site is contributed by Arg-331. Position 331 (Arg-331) interacts with UDP-alpha-D-glucose. A Phosphoserine modification is found at Ser-412. Position 501 (His-501) interacts with alpha-D-glucose 6-phosphate. UDP-alpha-D-glucose contacts are provided by Glu-510, Trp-512, and Gly-513. UDP is bound at residue Thr-515. Alpha-D-glucose 6-phosphate-binding residues include Arg-582 and Arg-586. Residues 634 to 737 (YRYPRPASVP…PTSSLGEERN (104 aa)) form a disordered region. A Phosphoserine; by DYRK2, GSK3-alpha, GSK3-beta and PASK modification is found at Ser-641. 2 positions are modified to phosphoserine; by GSK3-alpha and GSK3-beta: Ser-645 and Ser-649. Ser-652 is subject to Phosphoserine. Phosphoserine; by GSK3-alpha and GSK3-beta is present on Ser-653. Phosphoserine; by CK2 is present on Ser-657. Residues 658-681 (EDEEDPRNGPLEEDSERYDEDEEA) show a composition bias toward acidic residues. A Phosphoserine modification is found at Ser-672. The segment covering 682-695 (AKDRRNIRAPEWPR) has biased composition (basic and acidic residues). At Ser-698 the chain carries Phosphoserine. Over residues 698–714 (SCTSSTSGSKRNSVDTA) the composition is skewed to polar residues. Phosphothreonine is present on Thr-700. The residue at position 710 (Ser-710) is a Phosphoserine. The span at 715-737 (TSSSLSTPSEPLSPTSSLGEERN) shows a compositional bias: low complexity. Position 721 is a phosphothreonine (Thr-721). A phosphoserine mark is found at Ser-727 and Ser-731.

Belongs to the glycosyltransferase 3 family. In terms of assembly, part of the GYS1-GYG1 complex, a heterooctamer composed of a tetramer of GYS1 and 2 dimers of GYG1, where each GYS1 protomer binds to one GYG1 subunit (via GYG1 C-terminus); the GYS1 tetramer may dissociate from GYG1 dimers to continue glycogen polymerization on its own. Post-translationally, phosphorylation at Ser-8 by AMPK inactivates the enzyme activity. Primed phosphorylation at Ser-657 (site 5) by CSNK2A1 and CSNK2A2 is required for inhibitory phosphorylation at Ser-641 (site 3a), Ser-645 (site 3b), Ser-649 (site 3c) and Ser-653 (site 4) by GSK3A an GSK3B. Phosphorylated at Ser-641 by PASK, leading to inactivation; phosphorylation by PASK is inhibited by glycogen. Phosphorylated at Ser-641 by DYRK2, leading to inactivation. Dephosphorylation at Ser-641 and Ser-645 by PP1 activates the enzyme.

It carries out the reaction [(1-&gt;4)-alpha-D-glucosyl](n) + UDP-alpha-D-glucose = [(1-&gt;4)-alpha-D-glucosyl](n+1) + UDP + H(+). The protein operates within glycan biosynthesis; glycogen biosynthesis. Allosteric activation by glucose-6-phosphate. Phosphorylation reduces the activity towards UDP-glucose. When in the non-phosphorylated state, glycogen synthase does not require glucose-6-phosphate as an allosteric activator; when phosphorylated it does. In terms of biological role, glycogen synthase participates in the glycogen biosynthetic process along with glycogenin and glycogen branching enzyme. Extends the primer composed of a few glucose units formed by glycogenin by adding new glucose units to it. In this context, glycogen synthase transfers the glycosyl residue from UDP-Glc to the non-reducing end of alpha-1,4-glucan. The chain is Glycogen [starch] synthase, muscle (GYS1) from Macaca mulatta (Rhesus macaque).